A 37-amino-acid chain; its full sequence is Large ribosomal subunit protein bL36c (37 aa).

The protein belongs to the bacterial ribosomal protein bL36 family.

Its subcellular location is the plastid. The protein localises to the chloroplast. The sequence is that of Large ribosomal subunit protein bL36c from Chloranthus spicatus (Chulantree).